The following is a 130-amino-acid chain: Ribosome-binding factor A (130 aa).

The tract at residues 111–130 (RDLDDVGPEATSSDEDAEQR) is disordered.

Belongs to the RbfA family. As to quaternary structure, monomer. Binds 30S ribosomal subunits, but not 50S ribosomal subunits or 70S ribosomes.

Its subcellular location is the cytoplasm. In terms of biological role, one of several proteins that assist in the late maturation steps of the functional core of the 30S ribosomal subunit. Associates with free 30S ribosomal subunits (but not with 30S subunits that are part of 70S ribosomes or polysomes). Required for efficient processing of 16S rRNA. May interact with the 5'-terminal helix region of 16S rRNA. In Xanthomonas axonopodis pv. citri (strain 306), this protein is Ribosome-binding factor A.